Reading from the N-terminus, the 337-residue chain is 2-oxoglutarate-dependent ethylene/succinate-forming enzyme (337 aa).

The 121-residue stretch at 166–286 (GWHHMRVLRF…RFACAYFHEP (121 aa)) folds into the Fe2OG dioxygenase domain. 2 residues coordinate Fe cation: His189 and His268.

Belongs to the iron/ascorbate-dependent oxidoreductase family. In terms of assembly, monomer. Requires Fe(2+) as cofactor.

The enzyme catalyses 2-oxoglutarate + O2 + 2 H(+) = ethene + 3 CO2 + H2O. The catalysed reaction is L-arginine + 2-oxoglutarate + O2 = guanidine + L-glutamate 5-semialdehyde + succinate + CO2. It participates in alkene biosynthesis; ethylene biosynthesis via 2-oxoglutarate. Functionally, simultaneously catalyzes two reactions, namely formation of ethylene and of succinate from 2-oxoglutarate. The chain is 2-oxoglutarate-dependent ethylene/succinate-forming enzyme (efe) from Pseudomonas syringae pv. pisi.